Reading from the N-terminus, the 31-residue chain is Kallikrein-1 (31 aa).

In terms of domain architecture, Peptidase S1 spans 1–31; sequence VIGGQECARDSHPWQAAVYHFSDIECGGVLV.

It belongs to the peptidase S1 family. Kallikrein subfamily.

It catalyses the reaction Preferential cleavage of Arg-|-Xaa bonds in small molecule substrates. Highly selective action to release kallidin (lysyl-bradykinin) from kininogen involves hydrolysis of Met-|-Xaa or Leu-|-Xaa.. Glandular kallikreins cleave Met-Lys and Arg-Ser bonds in kininogen to release Lys-bradykinin. This chain is Kallikrein-1, found in Cavia porcellus (Guinea pig).